The primary structure comprises 844 residues: Putative ubiquitin thioesterase 232R (844 aa).

Disordered stretches follow at residues 136–223 (NSST…DEAE), 261–287 (SRRK…PPME), 326–377 (LLNG…PELT), and 422–541 (QKKQ…KLSV). Residues 137-216 (SSTRSRSPSV…PSRQSVRQSS (80 aa)) show a composition bias toward low complexity. Low complexity-rich tracts occupy residues 332–341 (RPSPSLPQSR) and 354–364 (RSPSVGSPSVR). Pro residues predominate over residues 429-438 (SPSPTPPSPV). Positions 472–485 (VQKKMGKSGEREPK) are enriched in basic and acidic residues. Residues 504-518 (SLRSRLSTQQQTQQS) show a composition bias toward low complexity. Residues 526–535 (ESIKPEESVR) are compositionally biased toward basic and acidic residues. The region spanning 590–725 (YTVKQVSGDG…NYHYTSLVPI (136 aa)) is the OTU domain. D598 is a catalytic residue. C601 functions as the Nucleophile in the catalytic mechanism. The active site involves H718.

It carries out the reaction Thiol-dependent hydrolysis of ester, thioester, amide, peptide and isopeptide bonds formed by the C-terminal Gly of ubiquitin (a 76-residue protein attached to proteins as an intracellular targeting signal).. In terms of biological role, hydrolase that can remove conjugated ubiquitin from proteins and may therefore play an important regulatory role at the level of protein turnover by preventing degradation. The protein is Putative ubiquitin thioesterase 232R of Aedes vexans (Inland floodwater mosquito).